Reading from the N-terminus, the 801-residue chain is PR domain zinc finger protein 4 (801 aa).

Positions 412-529 (KQLVLRQSIV…PENELLFYYS (118 aa)) constitute an SET domain. Residues 545 to 566 (HLCNCGKECNSYTEFKAHLTSH) form a C2H2-type 1; atypical zinc finger. C2H2-type zinc fingers lie at residues 618–640 (HKCD…LKIH), 646–668 (YRCT…MVIH), 674–696 (LKCD…VLIH), and 702–724 (IKCP…LNSH). The C2H2-type 6; atypical zinc-finger motif lies at 730-752 (YVCEKCTKAYLTKYHLTRHLKTC). Positions 751 to 782 (TCKGPTSSSSAPEEEEEDDSEEEDLADSVGTE) are disordered. Residues 762-776 (PEEEEEDDSEEEDLA) are compositionally biased toward acidic residues.

Belongs to the class V-like SAM-binding methyltransferase superfamily. Expressed in many tissues. Highly expressed in ovary, testis, pancreas, brain, heart and prostate.

It localises to the nucleus. May function as a transcription factor involved in cell differentiation. This Homo sapiens (Human) protein is PR domain zinc finger protein 4 (PRDM4).